The chain runs to 253 residues: MRILLSNDDGYLAPGLAALSDALQPLAELTVIAPEQNCSGASNSLTLSRPLSVQRAASTGFFYVNGTPTDSVHVALTGMADARPDLVVSGINNGQNMGEDTLYSGTVAAATEGIMFGVPAIAFSLVDKGWAHLPDAARVAAEIVKHYLAHPLPGQPLLNVNIPNLPYDELKGWKVTRLGKRHPSQPVIRQTDPRGEPIYWIGAAGEALDASDGTDFHAVANGFVSITPLQLDLTHTQMLPATREWARAGGRAS.

A divalent metal cation contacts are provided by Asp-8, Asp-9, Ser-39, and Asn-92.

It belongs to the SurE nucleotidase family. Requires a divalent metal cation as cofactor.

The protein resides in the cytoplasm. It catalyses the reaction a ribonucleoside 5'-phosphate + H2O = a ribonucleoside + phosphate. Functionally, nucleotidase that shows phosphatase activity on nucleoside 5'-monophosphates. This Burkholderia lata (strain ATCC 17760 / DSM 23089 / LMG 22485 / NCIMB 9086 / R18194 / 383) protein is 5'-nucleotidase SurE 2.